The chain runs to 153 residues: Cytochrome c-type biogenesis protein CcmE (153 aa).

Residues 1-8 (MATRRGRR) are Cytoplasmic-facing. The chain crosses the membrane as a helical; Signal-anchor for type II membrane protein span at residues 9–29 (ALLIAGGVGLLALAAALVLNA). Topologically, residues 30–153 (LRSNLVFFFS…PSATLQTEAR (124 aa)) are periplasmic. The heme site is built by His124 and Tyr128.

Belongs to the CcmE/CycJ family.

It is found in the cell inner membrane. Heme chaperone required for the biogenesis of c-type cytochromes. Transiently binds heme delivered by CcmC and transfers the heme to apo-cytochromes in a process facilitated by CcmF and CcmH. This chain is Cytochrome c-type biogenesis protein CcmE, found in Bordetella bronchiseptica (strain ATCC BAA-588 / NCTC 13252 / RB50) (Alcaligenes bronchisepticus).